The following is a 356-amino-acid chain: Heparan sulfate 2-O-sulfotransferase 1 (356 aa).

Residues 1-11 lie on the Cytoplasmic side of the membrane; it reads MGLLRIMMPPK. The chain crosses the membrane as a helical; Signal-anchor for type II membrane protein span at residues 12–28; the sequence is LQLLAVVAFAVAMLFLE. Residues 24–51 are a coiled coil; sequence MLFLENQIQKLEESRSKLERAIARHEVR. Topologically, residues 29-356 are lumenal; sequence NQIQKLEESR…FYEKIYPKSN (328 aa). Adenosine 3',5'-bisphosphate-binding residues include K83, T84, A85, S86, T87, and S88. Residues N108 and N127 are each glycosylated (N-linked (GlcNAc...) asparagine). Residues H140 and H142 contribute to the active site. The adenosine 3',5'-bisphosphate site is built by R164 and S172. Disulfide bonds link C201-C209 and C222-C228. Y279, S285, T290, and K293 together coordinate adenosine 3',5'-bisphosphate.

Belongs to the sulfotransferase 3 family. As to quaternary structure, homotrimer. Interacts with the C5-epimerase GLCE. Post-translationally, N-glycosylated.

The protein localises to the golgi apparatus membrane. In terms of biological role, catalyzes the transfer of a sulfo group from 3'-phospho-5'-adenylyl sulfate (PAPS) to the 2-OH position of iduronic acid (IdoA) or glucuronic acid (GlcA) within the heparan sulfate (HS) chain and participates in HS biosynthesis. Required for metanephric development of kidney formation, suggesting that 2-O-sulfation within HS is essential for signaling between ureteric bud and metanephric mesenchyme. The protein is Heparan sulfate 2-O-sulfotransferase 1 of Homo sapiens (Human).